Reading from the N-terminus, the 555-residue chain is Formate--tetrahydrofolate ligase (555 aa).

T64–T71 provides a ligand contact to ATP.

This sequence belongs to the formate--tetrahydrofolate ligase family.

The catalysed reaction is (6S)-5,6,7,8-tetrahydrofolate + formate + ATP = (6R)-10-formyltetrahydrofolate + ADP + phosphate. It participates in one-carbon metabolism; tetrahydrofolate interconversion. This chain is Formate--tetrahydrofolate ligase, found in Phocaeicola vulgatus (strain ATCC 8482 / DSM 1447 / JCM 5826 / CCUG 4940 / NBRC 14291 / NCTC 11154) (Bacteroides vulgatus).